Here is a 366-residue protein sequence, read N- to C-terminus: tRNA (guanine(26)-N(2))-dimethyltransferase (366 aa).

A disordered region spans residues 1–28 (MEVSEGSVTVEVPEERHGASEGSGEGVF). The Trm1 methyltransferase domain maps to 1-365 (MEVSEGSVTV…ADVADIRNAV (365 aa)). Positions 37, 64, and 79 each coordinate S-adenosyl-L-methionine. Zn(2+)-binding residues include cysteine 234, cysteine 237, cysteine 254, and cysteine 257.

It belongs to the class I-like SAM-binding methyltransferase superfamily. Trm1 family.

The catalysed reaction is guanosine(26) in tRNA + 2 S-adenosyl-L-methionine = N(2)-dimethylguanosine(26) in tRNA + 2 S-adenosyl-L-homocysteine + 2 H(+). Its function is as follows. Dimethylates a single guanine residue at position 26 of a number of tRNAs using S-adenosyl-L-methionine as donor of the methyl groups. This Natronomonas pharaonis (strain ATCC 35678 / DSM 2160 / CIP 103997 / JCM 8858 / NBRC 14720 / NCIMB 2260 / Gabara) (Halobacterium pharaonis) protein is tRNA (guanine(26)-N(2))-dimethyltransferase.